Here is a 487-residue protein sequence, read N- to C-terminus: Dihydrofolate synthase/folylpolyglutamate synthase (487 aa).

44–46 (DPS) serves as a coordination point for 7,8-dihydropteroate. 74–77 (GKTS) provides a ligand contact to ATP. Residues Thr76 and Ser98 each coordinate Mg(2+). 150–153 (SKFE) is a binding site for 7,8-dihydropteroate. Glu174 contributes to the Mg(2+) binding site. Residue 181 to 183 (WDA) participates in 7,8-dihydropteroate binding. Residues His201 and Asp203 each coordinate Mg(2+). ATP contacts are provided by residues Asn301, Arg338, and 351-354 (DAAH). Mg(2+) is bound at residue Asp384.

This sequence belongs to the folylpolyglutamate synthase family. In terms of assembly, monomer. Mg(2+) serves as cofactor.

The catalysed reaction is 7,8-dihydropteroate + L-glutamate + ATP = 7,8-dihydrofolate + ADP + phosphate + H(+). The enzyme catalyses (6S)-5,6,7,8-tetrahydrofolyl-(gamma-L-Glu)(n) + L-glutamate + ATP = (6S)-5,6,7,8-tetrahydrofolyl-(gamma-L-Glu)(n+1) + ADP + phosphate + H(+). The protein operates within cofactor biosynthesis; tetrahydrofolate biosynthesis; 7,8-dihydrofolate from 2-amino-4-hydroxy-6-hydroxymethyl-7,8-dihydropteridine diphosphate and 4-aminobenzoate: step 2/2. Its pathway is cofactor biosynthesis; tetrahydrofolylpolyglutamate biosynthesis. Catalyzes the addition of a glutamate residue to dihydropteroate (7,8-dihydropteroate or H2Pte) to form dihydrofolate (7,8-dihydrofolate monoglutamate or H2Pte-Glu). Also catalyzes successive additions of L-glutamate to tetrahydrofolate, leading to folylpolyglutamate derivatives. In terms of biological role, is involved in the bioactivation of the antituberculous drug para-aminosalicylic acid (PAS). Is able to use hydroxy-dihydropteroate (H2PtePAS) as substrate, which is the product formed by the action of DHPS (FolP1) on PAS, leading to hydroxy-dihydrofolate (H2PtePAS-Glu). This compound inhibits dihydrofolate reductase DHFR (DfrA), the next enzyme in the folate pathway, and thus disrupts the folate-dependent metabolic pathways. This Mycobacterium tuberculosis (strain ATCC 25618 / H37Rv) protein is Dihydrofolate synthase/folylpolyglutamate synthase.